The chain runs to 592 residues: MAPPVKGKRKQSEEGEPLDPPVSPQPDGEPRSRSPVRLEEPPEAGREREEEQEEEQAFLVSLYKFMKERHTPIERVPHLGFKQINLWKIYKAVEKLGAYELVTGRRLWKNVYDELGGSPGSTSAATCTRRHYERLVLPYVRHLKGEDDKPLPPSKPRKQYKMAKEPRGDDGATERPKKVKEEKRVDQLMPAKTKTDAPDPARLPSQETPRDGMEQRGPAAGPSLPFLGASGCPEAYKRLLSSFYCRGTHGIMSPLAKKKLLAQVSKAEALQCQEEGCRHGAGGEPQAPPAAPPLESPQSPGGPAEDSRHRLTPLEGRQAPGGGLWGETQAGPRPSAPVVTGCFHAYPSEVLKPISQRPRDLFPSLKDRVLLGPPAKEEGLPAKEPPLVWGGDAGRPSAFHKGSSRKGSLYPKPKACWVSPMTKVPAESPVPLPTFPSSPGLGHKRSLAEDSSVHGSKKLRAVSPFLKEANAQECGTKPRGPDLAVSCLLGPALPEAYRGTLLRCPLNFAGTLGPLKGQATLPFSPLVIPAFPAHLLATTAPSPMTAGLMHLPPASFDSALCHRLCPASSPWHVPPATAYTAPHFSFHLNTKL.

A disordered region spans residues 1 to 53 (MAPPVKGKRKQSEEGEPLDPPVSPQPDGEPRSRSPVRLEEPPEAGREREEEQE). Residues 1–299 (MAPPVKGKRK…AAPPLESPQS (299 aa)) form an interaction with SOX9 region. Residue S23 is modified to Phosphoserine. Basic and acidic residues predominate over residues 28–49 (GEPRSRSPVRLEEPPEAGRERE). The ARID domain occupies 52 to 144 (QEEEQAFLVS…LVLPYVRHLK (93 aa)). Residues K82 and K91 each participate in a glycyl lysine isopeptide (Lys-Gly) (interchain with G-Cter in ubiquitin) cross-link. The disordered stretch occupies residues 143-225 (LKGEDDKPLP…RGPAAGPSLP (83 aa)). The segment covering 162–186 (MAKEPRGDDGATERPKKVKEEKRVD) has biased composition (basic and acidic residues). S253 is modified (phosphoserine). The interval 277–333 (CRHGAGGEPQAPPAAPPLESPQSPGGPAEDSRHRLTPLEGRQAPGGGLWGETQAGPR) is disordered. The span at 286 to 295 (QAPPAAPPLE) shows a compositional bias: pro residues. Phosphoserine occurs at positions 438 and 463.

Interacts with SOX9. Interacts with ESR1. Interacts with RORC. Phosphorylated by MAPK14 on serine residues involving a TLR4 signaling pathway upon lipopolysaccharide (LPS) stimulation leading to its ubiquitination and proteasomal degradation. Post-translationally, ubiquitinated leading to proteasomal degradation; involving WWP1 linked to MAPK14-mediated phosphorylation upon LPS stimulation.

It localises to the nucleus. Functionally, DNA-binding protein that may regulate transcription and act as a repressor by binding to AT-rich stretches in the promoter region of target genes. May act as repressor and down-regulate enhancer-dependent gene expressison. May positively regulate chondrocyte-specific transcription such as of COL2A1 in collaboration with SOX9 and positively regulate histone H3 acetylation at chondrocyte-specific genes. May stimulate early-stage chondrocyte differentiation and inhibit later stage differention. Can repress ESR1-mediated transcriptional activation; proposed to act as corepressor for selective nuclear hormone receptors. As an RNA-binding protein, involved in the regulation of inflammatory response by stabilizing selective inflammation-related mRNAs, such as STAT3 and TBX21. Also stabilizes IL6 mRNA. Binds to stem loop structures located in the 3'UTRs of IL6, STAT3 and TBX21 mRNAs; at least for STAT3 prevents binding of ZC3H12A to the mRNA stem loop structure thus inhibiting its degradation activity. Contributes to elevated IL6 levels possibly implicated in autoimmunity processes. IL6-dependent stabilization of STAT3 mRNA may promote differentiation of naive CD4+ T-cells into T-helper Th17 cells. In CD4+ T-cells may also inhibit RORC-induced Th17 cell differentiation independently of IL6 signaling. Stabilization of TBX21 mRNA contributes to elevated interferon-gamma secretion in Th1 cells possibly implicated in the establishment of septic shock. Stabilizes TNFRSF4/OX40 mRNA by binding to the conserved stem loop structure in its 3'UTR; thereby competing with the mRNA-destabilizing functions of RC3H1 and endoribonuclease ZC3H12A. This Bos taurus (Bovine) protein is AT-rich interactive domain-containing protein 5A (ARID5A).